Consider the following 436-residue polypeptide: UBX domain-containing protein 7 (436 aa).

K19 is covalently cross-linked (Glycyl lysine isopeptide (Lys-Gly) (interchain with G-Cter in ubiquitin)). Positions 115-141 are disordered; it reads AGESSSRETNPGLAREEKSSRDVHRKN. The region spanning 212-290 is the UBX domain; that stretch reads LHSSKCVLQI…ELTPRSALLL (79 aa). A compositionally biased stretch (basic and acidic residues) spans 325–346; that stretch reads DKDPEVTSQREETSKPNRHEVR. 2 disordered regions span residues 325–357 and 371–436; these read DKDPEVTSQREETSKPNRHEVRSSTPLSGAASS and SSAH…EDKK. Over residues 347-357 the composition is skewed to low complexity; it reads SSTPLSGAASS. The segment covering 371-408 has biased composition (polar residues); the sequence is SSAHASPMLTPSGTRYPSETNLTTSRSVSPNVFQFVNN. At S388 the chain carries Phosphoserine. Residues 426–436 are compositionally biased toward basic and acidic residues; that stretch reads HLEKKKDEDKK.

As to quaternary structure, interacts with CDC48.

Its subcellular location is the endoplasmic reticulum. Functionally, involved in CDC48-dependent protein degradation through the ubiquitin/proteasome pathway. The chain is UBX domain-containing protein 7 (UBX7) from Saccharomyces cerevisiae (strain ATCC 204508 / S288c) (Baker's yeast).